We begin with the raw amino-acid sequence, 426 residues long: Glutamate-1-semialdehyde 2,1-aminomutase (426 aa).

N6-(pyridoxal phosphate)lysine is present on lysine 265.

It belongs to the class-III pyridoxal-phosphate-dependent aminotransferase family. HemL subfamily. In terms of assembly, homodimer. The cofactor is pyridoxal 5'-phosphate.

The protein resides in the cytoplasm. It carries out the reaction (S)-4-amino-5-oxopentanoate = 5-aminolevulinate. It functions in the pathway porphyrin-containing compound metabolism; protoporphyrin-IX biosynthesis; 5-aminolevulinate from L-glutamyl-tRNA(Glu): step 2/2. This chain is Glutamate-1-semialdehyde 2,1-aminomutase, found in Salmonella enteritidis PT4 (strain P125109).